The primary structure comprises 297 residues: UBX domain-containing protein 1 (297 aa).

Ala-2 is subject to N-acetylalanine. One can recognise a UBA domain in the interval 2 to 42; the sequence is AELTALESLIEMGFPRGRAEKALALTGNQGIEAAMDWLMEH. The disordered stretch occupies residues 38 to 214; that stretch reads WLMEHEDDPD…PPTKREYDQC (177 aa). The segment covering 42-52 has biased composition (acidic residues); it reads HEDDPDVDEPL. Residues 43–297 form an interaction with BRCA1 region; sequence EDDPDVDEPL…VLIVAKKCPS (255 aa). Composition is skewed to basic and acidic residues over residues 86–122 and 137–177; these read LTEE…EREK and KLQE…ERAK. Phosphoserine is present on Ser-199. Phosphoserine; by MAPK12 is present on Ser-200. A phosphothreonine mark is found at Thr-207 and Thr-229. The 83-residue stretch at 209 to 291 folds into the UBX domain; it reads REYDQCRIQV…GLVPSAVLIV (83 aa). At Ser-270 the chain carries Phosphoserine.

In terms of assembly, interacts with MAVS; this interaction prevents MAVS oligomerization and thus disrupts the RLR signaling pathway. Interacts with CUL1; this interaction inhibits CUL1-mediated degradation of NF-kappa-B inhibitors. Interacts with BIRC2/c-IAP1; this interaction prevents TNFalpha-stimulated RIP1 ubiquitination and subsequent NF-kappa-B activation. Component of a complex required to couple retrotranslocation, ubiquitination and deglycosylation composed of NGLY1, SAKS1, AMFR, VCP and RAD23B. Interacts with HOMER2. Interacts directly with VCP. Interacts with BRCA1 and BARD1; interaction takes place when BRCA1 is not autoubiquitinated but is strongly enhanced in the presence of autoubiquitinated BRCA1.

The protein resides in the cytoplasm. Its function is as follows. Ubiquitin-binding protein that plays a role in the modulation of innate immune response. Blocks both the RIG-I-like receptors (RLR) and NF-kappa-B pathways. Following viral infection, UBXN1 is induced and recruited to the RLR component MAVS. In turn, interferes with MAVS oligomerization, and disrupts the MAVS/TRAF3/TRAF6 signalosome. This function probably serves as a brake to prevent excessive RLR signaling. Interferes with the TNFalpha-triggered NF-kappa-B pathway by interacting with cellular inhibitors of apoptosis proteins (cIAPs) and thereby inhibiting their recruitment to TNFR1. Also prevents the activation of NF-kappa-B by associating with CUL1 and thus inhibiting NF-kappa-B inhibitor alpha/NFKBIA degradation that remains bound to NF-kappa-B. Interacts with the BRCA1-BARD1 heterodimer and regulates its activity. Specifically binds 'Lys-6'-linked polyubiquitin chains. Interaction with autoubiquitinated BRCA1 leads to the inhibition of the E3 ubiquitin-protein ligase activity of the BRCA1-BARD1 heterodimer. Component of a complex required to couple deglycosylation and proteasome-mediated degradation of misfolded proteins in the endoplasmic reticulum that are retrotranslocated in the cytosol. The polypeptide is UBX domain-containing protein 1 (Ubxn1) (Mus musculus (Mouse)).